The sequence spans 336 residues: N-((2S)-2-amino-2-carboxyethyl)-L-glutamate dehydrogenase (336 aa).

Residue Lys78 is the Proton donor/acceptor of the active site. The NAD(+) site is built by Arg122 and Lys242.

Belongs to the ornithine cyclodeaminase/mu-crystallin family. In terms of assembly, homodimer.

The catalysed reaction is N-[(2S)-2-amino-2-carboxyethyl]-L-glutamate + NAD(+) + H2O = (S)-2,3-diaminopropanoate + 2-oxoglutarate + NADH + H(+). It functions in the pathway siderophore biosynthesis. In terms of biological role, catalyzes the hydrolysis of N-((2S)-2-amino-2-carboxyethyl)-L-glutamate (ACEGA) to form L-2,3-diaminopropionic acid and 2-oxoglutarate. Involved in the biosynthesis of L-2,3-diaminopropionic acid (L-Dap), a precursor of staphyloferrin B and antibiotics. The protein is N-((2S)-2-amino-2-carboxyethyl)-L-glutamate dehydrogenase of Staphylococcus aureus (strain NCTC 8325 / PS 47).